The chain runs to 264 residues: Octanoyltransferase (264 aa).

The BPL/LPL catalytic domain maps to 74–262 (GTASELVWLV…AFESVFGPRQ (189 aa)). Substrate is bound by residues 113-120 (RGGEYTYH), 193-195 (AIG), and 206-208 (GIA). C224 functions as the Acyl-thioester intermediate in the catalytic mechanism.

The protein belongs to the LipB family.

It localises to the cytoplasm. It catalyses the reaction octanoyl-[ACP] + L-lysyl-[protein] = N(6)-octanoyl-L-lysyl-[protein] + holo-[ACP] + H(+). It functions in the pathway protein modification; protein lipoylation via endogenous pathway; protein N(6)-(lipoyl)lysine from octanoyl-[acyl-carrier-protein]: step 1/2. In terms of biological role, catalyzes the transfer of endogenously produced octanoic acid from octanoyl-acyl-carrier-protein onto the lipoyl domains of lipoate-dependent enzymes. Lipoyl-ACP can also act as a substrate although octanoyl-ACP is likely to be the physiological substrate. This Brucella melitensis biotype 1 (strain ATCC 23456 / CCUG 17765 / NCTC 10094 / 16M) protein is Octanoyltransferase.